Consider the following 1262-residue polypeptide: Protein stoned-B (1262 aa).

4 short sequence motifs (NPF) span residues 3–5 (NPF), 19–21 (NPF), 33–35 (NPF), and 43–45 (NPF). The segment at 17-36 (AANPFLMQSEPEPSSDNPFM) is disordered. The tract at residues 49 to 189 (ADDLELGAEP…DVSVDSGSSA (141 aa)) is disordered. Acidic residues predominate over residues 50–60 (DDLELGAEPEA). The segment covering 101–111 (PPQSQPQLQSH) has biased composition (low complexity). A compositionally biased stretch (pro residues) spans 115-124 (HPPPPRPLVP). Residues 128 to 145 (TQDLISTVSSQLDETSSE) show a composition bias toward polar residues. Residues 172–189 (DSGLADLLDVSVDSGSSA) are compositionally biased toward low complexity. An NPF 5 motif is present at residues 210 to 212 (NPF). Disordered regions lie at residues 225-452 (VPLP…SPPT) and 474-507 (EEMD…NFAP). A compositionally biased stretch (pro residues) spans 233–272 (KQPPRPPPPRPAPPRPAPPGQAAPQRPPPPLAAVNPPPAA). Residues 325 to 345 (DLDETIGEGEPPEQEEPDTEQ) show a composition bias toward acidic residues. Residues 384 to 401 (QVNNMAAPSGTASTQRAT) show a composition bias toward polar residues. The span at 417-429 (DDEDEPEAMQEPE) shows a compositional bias: acidic residues. The short motif at 493–495 (NPF) is the NPF 6 element. 2 positions are modified to phosphoserine: Ser623 and Ser626. Residues 643-709 (SGVAPQLAPP…QDTPQTPLYD (67 aa)) are disordered. The NPF 7 signature appears at 673-675 (NPF). One can recognise an SHD domain in the interval 728-902 (GWEMQLRQPN…KIPALRERAL (175 aa)). The interaction with Syt stretch occupies residues 847–1108 (KEFGSDLKKL…KGIERILGAV (262 aa)). The MHD domain occupies 906–1219 (MEEVQVTAVD…ARHEYKVGIE (314 aa)). The disordered stretch occupies residues 1226–1262 (TNAYLAATRPIREEPPTTATKPTASPVAPSDSDTDSN). Low complexity predominate over residues 1241 to 1254 (PTTATKPTASPVAP).

It belongs to the Stoned B family. Interacts with the second C2 domain of Syt.

Its subcellular location is the cytoplasm. It is found in the synapse. Functionally, adapter protein involved in endocytic recycling of synaptic vesicles membranes. May act by mediating the retrieval of synaptotagmin protein Syt from the plasma membrane, thereby facilitating the internalization of multiple synaptic vesicles from the plasma membrane. In Drosophila melanogaster (Fruit fly), this protein is Protein stoned-B (stnB).